The following is a 240-amino-acid chain: Uridylate cyclase (240 aa).

The region spanning 45–180 is the Guanylate cyclase domain; sequence TYLYADMANS…RAPNLAAKLS (136 aa). Residue Y48 coordinates a ribonucleoside 5'-triphosphate. Mn(2+) is bound by residues D50 and D94. R95 lines the a ribonucleoside 5'-triphosphate pocket.

The protein belongs to the adenylyl cyclase class-4/guanylyl cyclase family. Pyrimidine cyclase subfamily. In terms of assembly, homodimer. Mn(2+) is required as a cofactor.

The protein localises to the cytoplasm. The enzyme catalyses UTP = 3',5'-cyclic UMP + diphosphate. Pycsar (pyrimidine cyclase system for antiphage resistance) provides immunity against bacteriophage. The pyrimidine cyclase (PycC) synthesizes cyclic nucleotides in response to infection; these serve as specific second messenger signals. The signals activate the adjacent effector, leading to bacterial cell death and abortive phage infection. A clade B Pycsar system. Its function is as follows. The pyrimidine cyclase gene of a two-gene Pycsar system, weakly generates cyclic UMP (cUMP) from UTP, has little to no activity on ATP, CTP or GTP. Expression of this and adjacent effector RsmPycTM (AC A0A1V0HUU2) probably confers resistance to bacteriophage. The genes are probably only expressed in response to bacteriophage infection. This Rhodovulum sp. (strain MB263) protein is Uridylate cyclase.